The following is a 601-amino-acid chain: uncharacterized protein (601 aa).

Residues Arg-24–Gly-35 are compositionally biased toward basic residues. Disordered stretches follow at residues Arg-24–Asp-106 and Tyr-171–Glu-219. The segment covering Ser-54 to Arg-81 has biased composition (polar residues). Residues Thr-92 to Asp-106 show a composition bias toward basic and acidic residues. 2 positions are modified to phosphoserine: Ser-236 and Ser-238. The interval Arg-260 to Pro-283 is disordered.

The protein localises to the nucleus. This is an uncharacterized protein from Schizosaccharomyces pombe (strain 972 / ATCC 24843) (Fission yeast).